Consider the following 189-residue polypeptide: Thymidine kinase (189 aa).

Residues 9 to 16 (GTMNSGKS) and 85 to 88 (DEAQ) contribute to the ATP site. Residue E86 is the Proton acceptor of the active site. Zn(2+) contacts are provided by C143, C146, C180, and H183.

It belongs to the thymidine kinase family. As to quaternary structure, homotetramer.

It localises to the cytoplasm. The enzyme catalyses thymidine + ATP = dTMP + ADP + H(+). The polypeptide is Thymidine kinase (Lactococcus lactis subsp. lactis (strain IL1403) (Streptococcus lactis)).